The primary structure comprises 95 residues: Integration host factor subunit beta (95 aa).

A disordered region spans residues A57–Y76. Basic and acidic residues predominate over residues K65–Y76.

The protein belongs to the bacterial histone-like protein family. In terms of assembly, heterodimer of an alpha and a beta chain.

This protein is one of the two subunits of integration host factor, a specific DNA-binding protein that functions in genetic recombination as well as in transcriptional and translational control. In Enterobacter sp. (strain 638), this protein is Integration host factor subunit beta.